Here is a 520-residue protein sequence, read N- to C-terminus: Autophagy-related protein 22 (520 aa).

N-linked (GlcNAc...) asparagine glycosylation is present at Asn11. The next 4 membrane-spanning stretches (helical) occupy residues 32–52, 104–124, 133–153, and 158–178; these read IVGW…AIAT, FSVS…VVDI, NVLL…SRIY, and YMLA…NVVG. An N-linked (GlcNAc...) asparagine glycan is attached at Asn193. Helical transmembrane passes span 214-234 and 244-264; these read GASI…FLIK and VATL…SWLL. N-linked (GlcNAc...) asparagine glycosylation is present at Asn280. The next 6 helical transmembrane spans lie at 316 to 336, 350 to 370, 386 to 406, 415 to 435, 454 to 474, and 483 to 503; these read VVIF…INST, LSLI…AFTI, LIYI…GFVF, FEMF…SAVS, IFNV…GLIT, and SFFL…LLDV.

Belongs to the ATG22 family.

Its subcellular location is the vacuole membrane. In terms of biological role, vacuolar effluxer which mediate the efflux of amino acids resulting from autophagic degradation. The release of autophagic amino acids allows the maintenance of protein synthesis and viability during nitrogen starvation. This chain is Autophagy-related protein 22 (ATG22), found in Vanderwaltozyma polyspora (strain ATCC 22028 / DSM 70294 / BCRC 21397 / CBS 2163 / NBRC 10782 / NRRL Y-8283 / UCD 57-17) (Kluyveromyces polysporus).